The sequence spans 148 residues: Ubiquitin-conjugating enzyme E2 28 (148 aa).

The UBC core domain occupies 1–147 (MASKRILKEL…ARSWTQKYAM (147 aa)). The active-site Glycyl thioester intermediate is cysteine 85.

Belongs to the ubiquitin-conjugating enzyme family. Interacts with SINAT5. In terms of tissue distribution, expressed in seeds, pistils, siliques, hypocotyls and leaves.

It catalyses the reaction S-ubiquitinyl-[E1 ubiquitin-activating enzyme]-L-cysteine + [E2 ubiquitin-conjugating enzyme]-L-cysteine = [E1 ubiquitin-activating enzyme]-L-cysteine + S-ubiquitinyl-[E2 ubiquitin-conjugating enzyme]-L-cysteine.. The protein operates within protein modification; protein ubiquitination. Its function is as follows. Accepts the ubiquitin from the E1 complex and catalyzes its covalent attachment to other proteins. This Arabidopsis thaliana (Mouse-ear cress) protein is Ubiquitin-conjugating enzyme E2 28.